We begin with the raw amino-acid sequence, 314 residues long: MAFLEDGNHTVVTEFILLGLTDDPVLRVILFIIILCIYLVTVSGNLSTILLIRVSSQLHHPMYFFLSHLASIDIAISSSVTPNMVVNFLVERSSISYIGCGIQLGSAVFFGAIECFLLAVMAYDRFVAICNPLLYSTKMSKQVCIQLLVGSYIGGFIHASFFTLSFVSFLFCGPNRINHFFCDFTPLVELSCSDNSVLIILDSFSTGTIIVITVFVIAISYTCILITILKMHSTEGRHKAFSTCTSHLTVVTLLYGTVTFIYVMPKSSYSTDQNKVISVFYMVVIPMLNPIIYSLRNNEIKGALKKQLGEKNIF.

The Extracellular portion of the chain corresponds to 1 to 28 (MAFLEDGNHTVVTEFILLGLTDDPVLRV). N-linked (GlcNAc...) asparagine glycosylation occurs at Asn8. The helical transmembrane segment at 29–49 (ILFIIILCIYLVTVSGNLSTI) threads the bilayer. The Cytoplasmic segment spans residues 50–57 (LLIRVSSQ). A helical membrane pass occupies residues 58 to 78 (LHHPMYFFLSHLASIDIAISS). Residues 79-102 (SVTPNMVVNFLVERSSISYIGCGI) lie on the Extracellular side of the membrane. The cysteines at positions 100 and 192 are disulfide-linked. Residues 103-123 (QLGSAVFFGAIECFLLAVMAY) traverse the membrane as a helical segment. At 124–136 (DRFVAICNPLLYS) the chain is on the cytoplasmic side. The chain crosses the membrane as a helical span at residues 137-157 (TKMSKQVCIQLLVGSYIGGFI). The Extracellular portion of the chain corresponds to 158–199 (HASFFTLSFVSFLFCGPNRINHFFCDFTPLVELSCSDNSVLI). Residues 200–220 (ILDSFSTGTIIVITVFVIAIS) form a helical membrane-spanning segment. Over 221–240 (YTCILITILKMHSTEGRHKA) the chain is Cytoplasmic. Residues 241 to 261 (FSTCTSHLTVVTLLYGTVTFI) form a helical membrane-spanning segment. Topologically, residues 262 to 274 (YVMPKSSYSTDQN) are extracellular. The helical transmembrane segment at 275-295 (KVISVFYMVVIPMLNPIIYSL) threads the bilayer. At 296 to 314 (RNNEIKGALKKQLGEKNIF) the chain is on the cytoplasmic side.

It belongs to the G-protein coupled receptor 1 family.

It localises to the cell membrane. Potential odorant receptor. The sequence is that of Olfactory receptor 5P81 from Mus musculus (Mouse).